The primary structure comprises 558 residues: Glucose-6-phosphate isomerase (558 aa).

Lys-12 is subject to N6-acetyllysine. A phosphoserine mark is found at Ser-86 and Ser-107. Lys-142 carries the N6-acetyllysine modification. A D-glucose 6-phosphate-binding site is contributed by 159-160 (GS). At Ser-185 the chain carries Phosphoserine; by CK2. A D-glucose 6-phosphate-binding site is contributed by 210 to 215 (SKTFTT). The residue at position 250 (Thr-250) is a Phosphothreonine. Gln-354, Glu-358, and His-389 together coordinate D-glucose 6-phosphate. Residue Glu-358 is the Proton donor of the active site. His-389 is an active-site residue. Lys-454 carries the N6-acetyllysine; alternate modification. An N6-malonyllysine; alternate modification is found at Lys-454. Lys-454 is subject to N6-succinyllysine; alternate. Ser-455 bears the Phosphoserine mark. Lys-519 contributes to the D-glucose 6-phosphate binding site. Residue Lys-519 is part of the active site.

Belongs to the GPI family. In terms of assembly, homodimer; in the catalytically active form. Monomer in the secreted form. Post-translationally, phosphorylation at Ser-185 by CK2 has been shown to decrease enzymatic activity and may contribute to secretion by a non-classical secretory pathway. ISGylated.

It is found in the cytoplasm. Its subcellular location is the secreted. It catalyses the reaction alpha-D-glucose 6-phosphate = beta-D-fructose 6-phosphate. It participates in carbohydrate degradation; glycolysis; D-glyceraldehyde 3-phosphate and glycerone phosphate from D-glucose: step 2/4. In the cytoplasm, catalyzes the conversion of glucose-6-phosphate to fructose-6-phosphate, the second step in glycolysis, and the reverse reaction during gluconeogenesis. Besides it's role as a glycolytic enzyme, also acts as a secreted cytokine: acts as an angiogenic factor (AMF) that stimulates endothelial cell motility. Acts as a neurotrophic factor, neuroleukin, for spinal and sensory neurons. It is secreted by lectin-stimulated T-cells and induces immunoglobulin secretion. The polypeptide is Glucose-6-phosphate isomerase (Cricetulus griseus (Chinese hamster)).